A 442-amino-acid polypeptide reads, in one-letter code: Alpha-1,6-mannosyl-glycoprotein 2-beta-N-acetylglucosaminyltransferase (442 aa).

Over 1 to 9 (MRFRIYKRK) the chain is Cytoplasmic. A helical; Signal-anchor for type II membrane protein membrane pass occupies residues 10–29 (VLILTLVVAACGFVLWSSNG). At 30-442 (RQRKSDALGP…ELCKSYRRLQ (413 aa)) the chain is on the lumenal side. Residues N64 and N81 are each glycosylated (N-linked (GlcNAc...) asparagine). Residues 118–122 (QVHNR) and D149 each bind substrate. A disulfide bond links C191 and C205. Position 224 to 228 (224 to 228 (QTKHH)) interacts with substrate. D256 contributes to the Mn(2+) binding site. The cysteines at positions 278 and 281 are disulfide-linked. R293 is a substrate binding site. Disulfide bonds link C329-C352, C334-C435, and C373-C381. H369 contributes to the Mn(2+) binding site.

The protein belongs to the glycosyltransferase 16 (GT16) protein family. In terms of assembly, homodimer. The cofactor is Mn(2+). Detected in liver, lung, testis, kidney, brain, spleen, thymus, uterus and intestine.

Its subcellular location is the golgi apparatus membrane. The enzyme catalyses an N(4)-{beta-D-GlcNAc-(1-&gt;2)-alpha-D-Man-(1-&gt;3)-[alpha-D-Man-(1-&gt;6)]-beta-D-Man-(1-&gt;4)-beta-D-GlcNAc-(1-&gt;4)-beta-D-GlcNAc}-L-asparaginyl-[protein] + UDP-N-acetyl-alpha-D-glucosamine = N(4)-{beta-D-GlcNAc-(1-&gt;2)-alpha-D-Man-(1-&gt;3)-[beta-D-GlcNAc-(1-&gt;2)-alpha-D-Man-(1-&gt;6)]-beta-D-Man-(1-&gt;4)-beta-D-GlcNAc-(1-&gt;4)-beta-D-GlcNAc}-L-asparaginyl-[protein] + UDP + H(+). Its pathway is protein modification; protein glycosylation. Functionally, plays an essential role in protein N-glycosylation. Catalyzes the transfer of N-acetylglucosamine (GlcNAc) onto the free terminal mannose moiety in the core structure of the nascent N-linked glycan chain, giving rise to the second branch in complex glycans. This chain is Alpha-1,6-mannosyl-glycoprotein 2-beta-N-acetylglucosaminyltransferase (Mgat2), found in Mus musculus (Mouse).